The sequence spans 303 residues: 4-sulfomuconolactone hydrolase (303 aa).

It belongs to the metallo-dependent hydrolases superfamily. Sulfomuconolactone hydrolase family. As to quaternary structure, monomer. Requires Zn(2+) as cofactor.

The enzyme catalyses 4-sulfomuconolactone + H2O = maleylacetate + sulfite + 2 H(+). With respect to regulation, completely inhibited by ZnCl(2) and CuCl(2). In terms of biological role, involved in the degradation of 4-sulfocatechol which is a central intermediate in the degradation of substituted sulfonated benzenes. Catalyzes the hydrolytical desulfonation of 4-sulfomuconolactone to yield maleylacetate. The chain is 4-sulfomuconolactone hydrolase from Hydrogenophaga intermedia.